Reading from the N-terminus, the 358-residue chain is Methylthioribose-1-phosphate isomerase (358 aa).

Substrate-binding positions include 54-56 (RGA), arginine 96, and glutamine 205. The Proton donor role is filled by aspartate 246. A substrate-binding site is contributed by 256–257 (NK).

It belongs to the eIF-2B alpha/beta/delta subunits family. MtnA subfamily.

The catalysed reaction is 5-(methylsulfanyl)-alpha-D-ribose 1-phosphate = 5-(methylsulfanyl)-D-ribulose 1-phosphate. It functions in the pathway amino-acid biosynthesis; L-methionine biosynthesis via salvage pathway; L-methionine from S-methyl-5-thio-alpha-D-ribose 1-phosphate: step 1/6. Functionally, catalyzes the interconversion of methylthioribose-1-phosphate (MTR-1-P) into methylthioribulose-1-phosphate (MTRu-1-P). In Pseudomonas paraeruginosa (strain DSM 24068 / PA7) (Pseudomonas aeruginosa (strain PA7)), this protein is Methylthioribose-1-phosphate isomerase.